The sequence spans 478 residues: 3-ketoacyl-CoA synthase 3 (478 aa).

The signal sequence occupies residues M1–S25. Residues K26–L313 form the FAE domain. Catalysis depends on residues C168, H247, H345, H349, H378, and N382.

It belongs to the thiolase-like superfamily. Chalcone/stilbene synthases family. In terms of tissue distribution, expressed in siliques, leaves, stems and seedlings.

Its subcellular location is the endoplasmic reticulum. The catalysed reaction is a very-long-chain acyl-CoA + malonyl-CoA + H(+) = a very-long-chain 3-oxoacyl-CoA + CO2 + CoA. The protein operates within lipid metabolism; fatty acid biosynthesis. In Arabidopsis thaliana (Mouse-ear cress), this protein is 3-ketoacyl-CoA synthase 3.